Consider the following 829-residue polypeptide: Leucine--tRNA ligase (829 aa).

The short motif at 42–52 (PYPSGNLHMGH) is the 'HIGH' region element. The 'KMSKS' region motif lies at 582-586 (KMSKS). K585 provides a ligand contact to ATP.

The protein belongs to the class-I aminoacyl-tRNA synthetase family.

The protein localises to the cytoplasm. It catalyses the reaction tRNA(Leu) + L-leucine + ATP = L-leucyl-tRNA(Leu) + AMP + diphosphate. The sequence is that of Leucine--tRNA ligase from Moorella thermoacetica (strain ATCC 39073 / JCM 9320).